The chain runs to 349 residues: Uroporphyrinogen decarboxylase (349 aa).

Substrate contacts are provided by residues 23–27 (RQAGR), D71, Y148, S203, and H317.

Belongs to the uroporphyrinogen decarboxylase family. As to quaternary structure, homodimer.

It is found in the cytoplasm. The enzyme catalyses uroporphyrinogen III + 4 H(+) = coproporphyrinogen III + 4 CO2. It functions in the pathway porphyrin-containing compound metabolism; protoporphyrin-IX biosynthesis; coproporphyrinogen-III from 5-aminolevulinate: step 4/4. Its function is as follows. Catalyzes the decarboxylation of four acetate groups of uroporphyrinogen-III to yield coproporphyrinogen-III. In Sorangium cellulosum (strain So ce56) (Polyangium cellulosum (strain So ce56)), this protein is Uroporphyrinogen decarboxylase.